A 438-amino-acid chain; its full sequence is Phosphoribosylamine--glycine ligase (438 aa).

Residues 107–319 form the ATP-grasp domain; the sequence is RKLFEDYDIP…LAKISKQIVD (213 aa). Residue 134-197 coordinates ATP; it reads IDNFDEPVVV…EELLLGEEYT (64 aa). Mg(2+)-binding residues include Q277, E289, and N291. Q277, E289, and N291 together coordinate Mn(2+).

It belongs to the GARS family. It depends on Mg(2+) as a cofactor. Mn(2+) is required as a cofactor.

The enzyme catalyses 5-phospho-beta-D-ribosylamine + glycine + ATP = N(1)-(5-phospho-beta-D-ribosyl)glycinamide + ADP + phosphate + H(+). Its pathway is purine metabolism; IMP biosynthesis via de novo pathway; N(1)-(5-phospho-D-ribosyl)glycinamide from 5-phospho-alpha-D-ribose 1-diphosphate: step 2/2. The sequence is that of Phosphoribosylamine--glycine ligase from Methanosphaera stadtmanae (strain ATCC 43021 / DSM 3091 / JCM 11832 / MCB-3).